Reading from the N-terminus, the 306-residue chain is Protein pxr1 (306 aa).

Residues Met-1–Lys-11 show a composition bias toward basic residues. Disordered stretches follow at residues Met-1–Gly-27 and Ala-148–Pro-241. Residues Asp-15–Gly-27 are compositionally biased toward polar residues. Positions Thr-25 to Lys-79 constitute a G-patch domain. A compositionally biased stretch (basic and acidic residues) spans Asn-182–Gln-191. Residues Lys-219–Lys-228 are compositionally biased toward basic residues.

The protein belongs to the PINX1 family.

Its subcellular location is the nucleus. The protein resides in the nucleolus. In terms of biological role, involved in rRNA-processing at A0, A1 and A2 sites and negatively regulates telomerase. The chain is Protein pxr1 (pxr1) from Aspergillus oryzae (strain ATCC 42149 / RIB 40) (Yellow koji mold).